A 469-amino-acid polypeptide reads, in one-letter code: MSAPRTLYDKIWDDHVVDQQEDGTCLLYIDRHLVHEVTSPQAFEGLHMAGRPVRHPEKTLAVVDHNVPTSPDRINGIQNEESRIQVEALARNAADFGVEYYSERDKRQGIVHIVGPEQGFTLPGMTIVCGDSHTSTHGAFGALAHGIGTSEVEHVLATQTLIQKKAKNMLVRVDGKLPAGVTAKDIVLAIIGEIGTAGGTGYVIEYAGEAIRSLSMEGRMTICNMSIEGGARAGLIAPDETTFEYIKGRPRAPQGETLEQAINYWKTLHSDEGAHFDKIVTLDAGSLPPIVSWGSSPEDVVSVTGVVPNPDDIADETKRASKWRALDYMGLKPGTKITDIAVDRVFIGSCTNGRIEDLRAAAKVVEGKKVAPTVNAMIVPGSGLVKEQAEAEGLHKIFIEAGFDWREPGCSMCLAMNDDRLKPGERCASTSNRNFEGRQGFKGRTHLVSPAMAAAAAIAGHFVDIRAWK.

[4Fe-4S] cluster is bound by residues Cys350, Cys410, and Cys413.

This sequence belongs to the aconitase/IPM isomerase family. LeuC type 1 subfamily. Heterodimer of LeuC and LeuD. Requires [4Fe-4S] cluster as cofactor.

It catalyses the reaction (2R,3S)-3-isopropylmalate = (2S)-2-isopropylmalate. The protein operates within amino-acid biosynthesis; L-leucine biosynthesis; L-leucine from 3-methyl-2-oxobutanoate: step 2/4. Catalyzes the isomerization between 2-isopropylmalate and 3-isopropylmalate, via the formation of 2-isopropylmaleate. This is 3-isopropylmalate dehydratase large subunit from Brucella melitensis biotype 2 (strain ATCC 23457).